Here is a 337-residue protein sequence, read N- to C-terminus: uncharacterized protein (337 aa).

The protein belongs to the NAD(P)-dependent epimerase/dehydratase family.

This is an uncharacterized protein from Escherichia coli (strain K12).